Here is a 116-residue protein sequence, read N- to C-terminus: uncharacterized protein (116 aa).

2 consecutive transmembrane segments (helical) span residues 24–44 (VPFAAAGGYPISFLFIKVLTA) and 70–90 (VILTHFLVPIFFFLFQYIILS).

The protein localises to the membrane. This is an uncharacterized protein from Saccharomyces cerevisiae (strain ATCC 204508 / S288c) (Baker's yeast).